The sequence spans 118 residues: Na(+)/H(+) antiporter subunit G1 (118 aa).

The next 3 helical transmembrane spans lie at 9–29 (IALILVIIGSLISALAAIGIL), 41–61 (AGKAATLGAMLLISGVFLFFI), and 70–90 (QLIVGILFILITGPLASHLII).

This sequence belongs to the CPA3 antiporters (TC 2.A.63) subunit G family. In terms of assembly, may form a heterooligomeric complex that consists of seven subunits: mnhA1, mnhB1, mnhC1, mnhD1, mnhE1, mnhF1 and mnhG1.

Its subcellular location is the cell membrane. Functionally, mnh complex is a Na(+)/H(+) antiporter involved in Na(+) excretion. The sequence is that of Na(+)/H(+) antiporter subunit G1 (mnhG1) from Staphylococcus saprophyticus subsp. saprophyticus (strain ATCC 15305 / DSM 20229 / NCIMB 8711 / NCTC 7292 / S-41).